Consider the following 465-residue polypeptide: MERSGTTPRFAQNPVVNDTGLLEALSHFNREKIPERVVHAKGTGAYGEFEVTDDISDICNIDMLLGVGKKTPCVGRFSTTGLERGSAEGIRDVKGLGLKFDTKEGNWDWVCINFPYFFIRDPAKFPDLMHAQQRDPKTNLLNPNMYWDWVADNPESLHLVLTLFSKLGTMFNWRTMSAYLGHAYKWTMPDGSFKYVHVYLSPNGGPSNENASMDDAMDENINDPDGASRDLYEAIERGDFPTWTAYAQVVDPEDAPDLDFNILDMTKHWNYGFYPKNGSVIPKRAFGTLTLNRNPEKYFSEIECLTFSPSNLVPGVLPSEDPILQARMFAYPDAQRYRLGVNPENPPARPKKPLSLKPGSQKFDEWVSQVSSPAWSEAKEDDYEFARELYEWYPQFRDQEFQNELIDNLAESISQTCDAVRQKVYRTFALVSTDLADRVREGVEKRLETAATNSTPQELPGRARL.

The active site involves H39. Residue Y331 coordinates heme.

It belongs to the catalase family. Requires heme as cofactor.

It participates in alkaloid biosynthesis. Catalase; part of the gene cluster that mediates the biosynthesis of communesins, a prominent class of indole alkaloids with great potential as pharmaceuticals. Communesins are biosynthesized by the coupling of tryptamine and aurantioclavine, two building blocks derived from L-tryptophan. The L-tryptophan decarboxylase cnsB converts L-tryptophan to tryptamine, whereas the tryptophan dimethylallyltransferase cnsF converts L-tryptophan to 4-dimethylallyl tryptophan which is further transformed to aurantioclavine by the aurantioclavine synthase cnsA, probably aided by the catalase cnsD. The cytochrome P450 monooxygenase cnsC catalyzes the heterodimeric coupling between the two different indole moieties, tryptamine and aurantioclavine, to construct vicinal quaternary stereocenters and yield the heptacyclic communesin scaffold. The O-methyltransferase cnsE then methylates the communesin scaffold to produce communesin K, the simplest characterized communesin that contains the heptacyclic core. The dioxygenase cnsJ converts communesin K into communesin I. Acylation to introduce the hexadienyl group at position N16 of communesin I by the acyltransferase cnsK leads to the production of communesin B. The hexadienyl group is produced by the highly reducing polyketide synthase cnsI, before being hydrolytically removed from cnsI by the serine hydrolase cnsH, converted into hexadienyl-CoA by the CoA ligase cnsG, and then transferred to communesin I by cnsK. Surprisingly, cnsK may also be a promiscuous acyltransferase that can tolerate a range of acyl groups, including acetyl-, propionyl-, and butyryl-CoA, which lead to communesins A, G and H respectively. The roles of the alpha-ketoglutarate-dependent dioxygenases cnsM and cnsP have still to be determined. This chain is Catalase cnsD, found in Penicillium expansum (Blue mold rot fungus).